Reading from the N-terminus, the 394-residue chain is N-acetylgalactosamine-6-phosphate deacetylase (394 aa).

Position 137 (Glu137) interacts with Zn(2+). 148-149 is a substrate binding site; the sequence is CH. Zn(2+)-binding residues include His201 and His222. Substrate contacts are provided by residues 225 to 226, Arg233, and 254 to 257; these read NG and DGQH. The active-site Proton donor/acceptor is the Asp280. 313 to 315 contributes to the substrate binding site; sequence LAG.

This sequence belongs to the metallo-dependent hydrolases superfamily. NagA family.

The protein localises to the cytoplasm. The catalysed reaction is N-acetyl-D-galactosamine 6-phosphate + H2O = D-galactosamine 6-phosphate + acetate. The enzyme catalyses N-acetyl-D-glucosamine 6-phosphate + H2O = D-glucosamine 6-phosphate + acetate. Its function is as follows. Involved in the pathway of N-acetyl-D-galactosamine degradation. Catalyzes the conversion of N-acetyl-D-galactosamine 6-phosphate to D-galactosamine 6-phosphate and acetate. It can also catalyze the conversion of N-acetyl-D-glucosamine 6-phosphate. The polypeptide is N-acetylgalactosamine-6-phosphate deacetylase (Shewanella sp. (strain ANA-3)).